Consider the following 282-residue polypeptide: Undecaprenyl-diphosphatase (282 aa).

6 helical membrane-spanning segments follow: residues 90 to 110 (YRLGWYVIIGTIPICVMGLLF), 121 to 141 (LWVVATALVVFSGVIALAEYL), 165 to 185 (LALVPGVSRSGSTISAGLFLG), 194 to 214 (FGFLLAIPAVFASGLFSLPDA), 228 to 248 (QLLVATLIAFVVGLAAVSWFL), and 256 to 276 (MYWFVGYRVVVGVVVLILLAT).

Belongs to the UppP family.

It localises to the cell membrane. The enzyme catalyses di-trans,octa-cis-undecaprenyl diphosphate + H2O = di-trans,octa-cis-undecaprenyl phosphate + phosphate + H(+). Catalyzes the dephosphorylation of undecaprenyl diphosphate (UPP). Confers resistance to bacitracin. The sequence is that of Undecaprenyl-diphosphatase from Mycobacterium marinum (strain ATCC BAA-535 / M).